A 199-amino-acid polypeptide reads, in one-letter code: Charged multivesicular body protein 1B1 (199 aa).

Residues 10–48 are a coiled coil; the sequence is NLKFAAKELNRSSKKCDKEEKAEKAKIKKAIQKGNMEVA. Positions 132–156 are interaction with IST1; sequence MEDTMSSTTTLTTPQNQVDMLLQEM. The disordered stretch occupies residues 167–199; that stretch reads ELPQGQTGSVGTSVASAEQDELSQRLARLRDQV. The span at 170-182 shows a compositional bias: polar residues; it reads QGQTGSVGTSVAS. Positions 174–199 are interaction with SPAST; sequence GSVGTSVASAEQDELSQRLARLRDQV. Positions 178–199 form a coiled coil; that stretch reads TSVASAEQDELSQRLARLRDQV. Residues 180–196 form an interaction with VPS4A, MITD1 and STAMBP region; sequence VASAEQDELSQRLARLR. Residues 180-199 form an interaction with VTA1 region; the sequence is VASAEQDELSQRLARLRDQV. Positions 183 to 199 are interaction with VPS4B; the sequence is AEQDELSQRLARLRDQV. Positions 186-196 match the MIT-interacting motif motif; the sequence is DELSQRLARLR.

Belongs to the SNF7 family. Probable peripherally associated component of the endosomal sorting required for transport complex III (ESCRT-III). ESCRT-III components are thought to multimerize to form a flat lattice on the perimeter membrane of the endosome. Several assembly forms of ESCRT-III may exist that interact and act sequentially. Interacts with CHMP1A. Interacts with VTA1; the interaction probably involves the open conformation of CHMP1B. Interacts with CHMP2A. Interacts with VPS4A; the interaction is direct. Interacts with VPS4B; the interaction is direct. Interacts with SPAST (via MIT domain); the interaction is direct. Interacts with IST1. Interacts with MITD1. Interacts with STAMBP.

The protein resides in the cytoplasm. The protein localises to the cytosol. Its subcellular location is the endosome. It localises to the late endosome membrane. Probable peripherally associated component of the endosomal sorting required for transport complex III (ESCRT-III) which is involved in multivesicular bodies (MVBs) formation and sorting of endosomal cargo proteins into MVBs. MVBs contain intraluminal vesicles (ILVs) that are generated by invagination and scission from the limiting membrane of the endosome and mostly are delivered to lysosomes enabling degradation of membrane proteins, such as stimulated growth factor receptors, lysosomal enzymes and lipids. The MVB pathway appears to require the sequential function of ESCRT-O, -I,-II and -III complexes. ESCRT-III proteins mostly dissociate from the invaginating membrane before the ILV is released. The ESCRT machinery also functions in topologically equivalent membrane fission events, such as the terminal stages of cytokinesis. ESCRT-III proteins are believed to mediate the necessary vesicle extrusion and/or membrane fission activities, possibly in conjunction with the AAA ATPase VPS4. Involved in cytokinesis. Involved in recruiting VPS4A and/or VPS4B and SPAST to the midbody of dividing cells. This is Charged multivesicular body protein 1B1 from Mus musculus (Mouse).